We begin with the raw amino-acid sequence, 590 residues long: DNA primase (590 aa).

The segment at 37-61 (CPFHKEKTPSFSVSPTKQFYHCFSC) adopts a CHC2-type zinc-finger fold. Positions 255-337 (GRILVVEGYM…DKSLHFLFLP (83 aa)) constitute a Toprim domain. Mg(2+) is bound by residues glutamate 261, aspartate 305, and aspartate 307.

Belongs to the DnaG primase family. As to quaternary structure, monomer. Interacts with DnaB. The cofactor is Zn(2+). Requires Mg(2+) as cofactor.

The enzyme catalyses ssDNA + n NTP = ssDNA/pppN(pN)n-1 hybrid + (n-1) diphosphate.. In terms of biological role, RNA polymerase that catalyzes the synthesis of short RNA molecules used as primers for DNA polymerase during DNA replication. The sequence is that of DNA primase from Neisseria meningitidis serogroup A / serotype 4A (strain DSM 15465 / Z2491).